A 184-amino-acid polypeptide reads, in one-letter code: Photosystem I assembly protein Ycf4 (184 aa).

The next 2 helical transmembrane spans lie at 19 to 39 (LSNF…LLVG) and 57 to 77 (FIFF…LFIS).

It belongs to the Ycf4 family.

Its subcellular location is the plastid. It localises to the chloroplast thylakoid membrane. Functionally, seems to be required for the assembly of the photosystem I complex. The sequence is that of Photosystem I assembly protein Ycf4 from Jasminum nudiflorum (Winter jasmine).